The following is a 397-amino-acid chain: GDNF family receptor alpha-3 (397 aa).

The signal sequence occupies residues 1–28; it reads MGLSWSPRPPLLMILLLVLSLWLPLGAG. Cys48 and Cys54 are oxidised to a cystine. Residues Asn92 and Asn145 are each glycosylated (N-linked (GlcNAc...) asparagine). 10 disulfides stabilise this stretch: Cys159–Cys215, Cys166–Cys172, Cys183–Cys193, Cys188–Cys236, Cys217–Cys224, Cys245–Cys313, Cys252–Cys258, Cys269–Cys285, Cys278–Cys337, and Cys315–Cys325. Asn306 carries an N-linked (GlcNAc...) asparagine glycan. Asn371 carries GPI-anchor amidated asparagine lipidation. A propeptide spans 372-397 (removed in mature form); sequence PALRLQPRLPILSFSILPLILLQTLW.

It belongs to the GDNFR family. In terms of assembly, interacts with ARTN ligand and RET: forms a 2:2:2 ternary complex composed of ARTN ligand, GFRA3 and RET receptor. Interacts with SORL1.

It is found in the cell membrane. In terms of biological role, receptor for artemin (ARTN), a growth factor that supports the survival of sensory and sympathetic peripheral neurons. ARTN-binding leads to autophosphorylation and activation of the RET receptor. The polypeptide is GDNF family receptor alpha-3 (Gfra3) (Mus musculus (Mouse)).